The primary structure comprises 208 residues: Large ribosomal subunit protein bL25 (208 aa).

Acidic residues predominate over residues 185–195 (DLEEETGEAEG). The disordered stretch occupies residues 185–208 (DLEEETGEAEGETAAAPAEEGAES). The span at 196–208 (ETAAAPAEEGAES) shows a compositional bias: low complexity.

The protein belongs to the bacterial ribosomal protein bL25 family. CTC subfamily. In terms of assembly, part of the 50S ribosomal subunit; part of the 5S rRNA/L5/L18/L25 subcomplex. Contacts the 5S rRNA. Binds to the 5S rRNA independently of L5 and L18.

In terms of biological role, this is one of the proteins that binds to the 5S RNA in the ribosome where it forms part of the central protuberance. In Rhodococcus opacus (strain B4), this protein is Large ribosomal subunit protein bL25.